The primary structure comprises 77 residues: UPF0346 protein lin1971 (77 aa).

This sequence belongs to the UPF0346 family.

In Listeria innocua serovar 6a (strain ATCC BAA-680 / CLIP 11262), this protein is UPF0346 protein lin1971.